A 495-amino-acid polypeptide reads, in one-letter code: Thiosulfate sulfurtransferase/rhodanese-like domain-containing protein 2 (495 aa).

A Phosphoserine modification is found at S268. The region spanning E300–Y395 is the Rhodanese domain. Residue C354 is the Cysteine persulfide intermediate of the active site.

This is Thiosulfate sulfurtransferase/rhodanese-like domain-containing protein 2 (Tstd2) from Mus musculus (Mouse).